The sequence spans 626 residues: Serine/threonine-protein kinase PknB (626 aa).

Over 1 to 332 (MTTPSHLSDR…DRSIGSVGRW (332 aa)) the chain is Cytoplasmic. One can recognise a Protein kinase domain in the interval 11-274 (YELGEILGFG…TAAEMRADLV (264 aa)). Residues 17 to 25 (LGFGGMSEV), Lys-40, and 93 to 95 (EYV) each bind ATP. Asp-138 functions as the Proton acceptor in the catalytic mechanism. Residues 140–143 (KPAN) and Asp-156 contribute to the ATP site. Residues Asn-143 and Asp-156 each contribute to the Mg(2+) site. Residues Ser-166 and Ser-169 each carry the phosphoserine; by autocatalysis modification. Residues Thr-171, Thr-173, and Thr-294 each carry the phosphothreonine; by autocatalysis modification. Residue Ser-295 is modified to Phosphoserine; by autocatalysis. The tract at residues 299–323 (SAAGNLSGPRTDPLPRQDLDDTDRD) is disordered. Thr-309 is subject to Phosphothreonine; by autocatalysis. The segment covering 311 to 323 (PLPRQDLDDTDRD) has biased composition (basic and acidic residues). A helical transmembrane segment spans residues 333–353 (VAVVAVLAVLTVVVTIAINTF). Over 354–626 (GGITRDVQVP…DGIITLRFGQ (273 aa)) the chain is Extracellular. 4 consecutive PASTA domains span residues 356 to 422 (ITRD…NVST), 423 to 490 (GPEQ…IVGS), 491 to 557 (GPAT…QVSK), and 558 to 626 (GNQF…RFGQ).

The protein belongs to the protein kinase superfamily. Ser/Thr protein kinase family. As to quaternary structure, homodimer. Post-translationally, autophosphorylated. Dephosphorylated by PstP.

It is found in the cell membrane. The catalysed reaction is L-seryl-[protein] + ATP = O-phospho-L-seryl-[protein] + ADP + H(+). It catalyses the reaction L-threonyl-[protein] + ATP = O-phospho-L-threonyl-[protein] + ADP + H(+). Its function is as follows. Protein kinase that regulates many aspects of mycobacterial physiology. Is a key component of a signal transduction pathway that regulates cell growth, cell shape and cell division via phosphorylation of target proteins. The chain is Serine/threonine-protein kinase PknB (pknB) from Mycobacterium bovis (strain ATCC BAA-935 / AF2122/97).